The following is a 79-amino-acid chain: ATP synthase subunit c (79 aa).

2 consecutive transmembrane segments (helical) span residues 11–31 (MAAA…IGIL) and 53–73 (FFIV…LGLY).

Belongs to the ATPase C chain family. F-type ATPases have 2 components, F(1) - the catalytic core - and F(0) - the membrane proton channel. F(1) has five subunits: alpha(3), beta(3), gamma(1), delta(1), epsilon(1). F(0) has three main subunits: a(1), b(2) and c(10-14). The alpha and beta chains form an alternating ring which encloses part of the gamma chain. F(1) is attached to F(0) by a central stalk formed by the gamma and epsilon chains, while a peripheral stalk is formed by the delta and b chains.

It localises to the cell inner membrane. In terms of biological role, f(1)F(0) ATP synthase produces ATP from ADP in the presence of a proton or sodium gradient. F-type ATPases consist of two structural domains, F(1) containing the extramembraneous catalytic core and F(0) containing the membrane proton channel, linked together by a central stalk and a peripheral stalk. During catalysis, ATP synthesis in the catalytic domain of F(1) is coupled via a rotary mechanism of the central stalk subunits to proton translocation. Key component of the F(0) channel; it plays a direct role in translocation across the membrane. A homomeric c-ring of between 10-14 subunits forms the central stalk rotor element with the F(1) delta and epsilon subunits. The chain is ATP synthase subunit c from Citrobacter koseri (strain ATCC BAA-895 / CDC 4225-83 / SGSC4696).